Consider the following 525-residue polypeptide: Erythropoietin receptor (525 aa).

Positions 1-32 (MGAPSSLLFSTAHWRTVPFLLAFWVLLSTGTA) are cleaved as a signal peptide. The Extracellular portion of the chain corresponds to 33–249 (EDPTMTPEFL…TIATIIDLRL (217 aa)). A disulfide bridge connects residues Cys58 and Cys68. Asn77, Asn100, Asn149, and Asn185 each carry an N-linked (GlcNAc...) asparagine glycan. Cys91 and Cys107 form a disulfide bridge. Residues 146 to 246 (PPLNVTVKEK…APITIATIID (101 aa)) enclose the Fibronectin type-III domain. Residues 232–236 (WSDWT) carry the WSXWS motif motif. Residues 250–270 (LLLLSIAIFVALIAGVGVYIF) form a helical membrane-spanning segment. Residues 271 to 525 (MRHGMYLKHK…NFLAPIYSQS (255 aa)) lie on the Cytoplasmic side of the membrane. The Box 1 motif signature appears at 281–289 (VWPQVPTPE). 2 disordered regions span residues 434 to 459 (APRMEHERHRVSRENSVSSDGKQSIP) and 492 to 513 (LDMSSSGEHSPPPSPNFYQNSP). Residues 447–459 (ENSVSSDGKQSIP) show a composition bias toward polar residues. The short motif at 487–492 (LKYAYL) is the ITIM motif element.

The protein belongs to the type I cytokine receptor family. Type 1 subfamily. Expressed in the ventral blood island from stage 28 through to stage 36. Expressed in the circulating blood by stage 40. In the adult, highly expressed in peripheral blood cells including immature erythrocytes and basophils, and moderately expressed in the hematopoietic organs: liver, kidney and spleen. Expressed at a low level in adult brain.

It localises to the cell membrane. Functionally, receptor for erythropoietin. Mediates erythropoietin-induced erythroblast proliferation and differentiation. This chain is Erythropoietin receptor, found in Xenopus laevis (African clawed frog).